A 430-amino-acid polypeptide reads, in one-letter code: S-adenosylmethionine synthase (430 aa).

Residue His-14 coordinates ATP. Asp-16 serves as a coordination point for Mg(2+). Glu-42 is a binding site for K(+). Positions 55 and 98 each coordinate L-methionine. Residues 98-108 are flexible loop; the sequence is QSADINRGVER. ATP is bound by residues 164–166, 254–255, Asp-263, 269–270, Ala-286, and Lys-290; these read DAK, KF, and RK. Position 263 (Asp-263) interacts with L-methionine. Lys-294 is a binding site for L-methionine.

Belongs to the AdoMet synthase family. As to quaternary structure, homotetramer; dimer of dimers. The cofactor is Mg(2+). K(+) serves as cofactor.

The protein localises to the cytoplasm. It catalyses the reaction L-methionine + ATP + H2O = S-adenosyl-L-methionine + phosphate + diphosphate. It functions in the pathway amino-acid biosynthesis; S-adenosyl-L-methionine biosynthesis; S-adenosyl-L-methionine from L-methionine: step 1/1. Catalyzes the formation of S-adenosylmethionine (AdoMet) from methionine and ATP. The overall synthetic reaction is composed of two sequential steps, AdoMet formation and the subsequent tripolyphosphate hydrolysis which occurs prior to release of AdoMet from the enzyme. This is S-adenosylmethionine synthase from Bacteroides fragilis (strain ATCC 25285 / DSM 2151 / CCUG 4856 / JCM 11019 / LMG 10263 / NCTC 9343 / Onslow / VPI 2553 / EN-2).